The chain runs to 528 residues: Glucose-6-phosphate isomerase (528 aa).

The Proton donor role is filled by Glu-322. Active-site residues include His-351 and Lys-455.

Belongs to the GPI family.

The protein resides in the cytoplasm. It catalyses the reaction alpha-D-glucose 6-phosphate = beta-D-fructose 6-phosphate. It participates in carbohydrate biosynthesis; gluconeogenesis. Its pathway is carbohydrate degradation; glycolysis; D-glyceraldehyde 3-phosphate and glycerone phosphate from D-glucose: step 2/4. Catalyzes the reversible isomerization of glucose-6-phosphate to fructose-6-phosphate. The polypeptide is Glucose-6-phosphate isomerase (Nostoc sp. (strain PCC 7120 / SAG 25.82 / UTEX 2576)).